Consider the following 88-residue polypeptide: Cytochrome c oxidase subunit 6B2 (88 aa).

The segment at 1-21 is disordered; that stretch reads MLGVQAQMPAPGQWTTPPFDP. One can recognise a CHCH domain in the interval 29-75; that stretch reads TRNCYQNFLDYHRCVKTMDRRGKNTQACDYYFRVFHSLCPVSWVQRW. The short motif at 32–42 is the Cx9C motif element; sequence CYQNFLDYHRC. Intrachain disulfides connect Cys32/Cys67 and Cys42/Cys56. The Cx10C motif signature appears at 56 to 67; that stretch reads CDYYFRVFHSLC.

The protein belongs to the cytochrome c oxidase subunit 6B family. In terms of assembly, component of the cytochrome c oxidase (complex IV, CIV), a multisubunit enzyme composed of 14 subunits. The complex is composed of a catalytic core of 3 subunits MT-CO1, MT-CO2 and MT-CO3, encoded in the mitochondrial DNA, and 11 supernumerary subunits COX4I, COX5A, COX5B, COX6A, COX6B, COX6C, COX7A, COX7B, COX7C, COX8 and NDUFA4, which are encoded in the nuclear genome. The complex exists as a monomer or a dimer and forms supercomplexes (SCs) in the inner mitochondrial membrane with NADH-ubiquinone oxidoreductase (complex I, CI) and ubiquinol-cytochrome c oxidoreductase (cytochrome b-c1 complex, complex III, CIII), resulting in different assemblies (supercomplex SCI(1)III(2)IV(1) and megacomplex MCI(2)III(2)IV(2)). In terms of tissue distribution, testis specific.

It is found in the mitochondrion inner membrane. It participates in energy metabolism; oxidative phosphorylation. In terms of biological role, component of the cytochrome c oxidase, the last enzyme in the mitochondrial electron transport chain which drives oxidative phosphorylation. The respiratory chain contains 3 multisubunit complexes succinate dehydrogenase (complex II, CII), ubiquinol-cytochrome c oxidoreductase (cytochrome b-c1 complex, complex III, CIII) and cytochrome c oxidase (complex IV, CIV), that cooperate to transfer electrons derived from NADH and succinate to molecular oxygen, creating an electrochemical gradient over the inner membrane that drives transmembrane transport and the ATP synthase. Cytochrome c oxidase is the component of the respiratory chain that catalyzes the reduction of oxygen to water. Electrons originating from reduced cytochrome c in the intermembrane space (IMS) are transferred via the dinuclear copper A center (CU(A)) of subunit 2 and heme A of subunit 1 to the active site in subunit 1, a binuclear center (BNC) formed by heme A3 and copper B (CU(B)). The BNC reduces molecular oxygen to 2 water molecules using 4 electrons from cytochrome c in the IMS and 4 protons from the mitochondrial matrix. This Rattus norvegicus (Rat) protein is Cytochrome c oxidase subunit 6B2 (Cox6b2).